The chain runs to 1172 residues: DNA-directed RNA polymerase subunit beta (1172 aa).

The protein belongs to the RNA polymerase beta chain family. As to quaternary structure, the RNAP catalytic core consists of 2 alpha, 1 beta, 1 beta' and 1 omega subunit. When a sigma factor is associated with the core the holoenzyme is formed, which can initiate transcription.

The catalysed reaction is RNA(n) + a ribonucleoside 5'-triphosphate = RNA(n+1) + diphosphate. Functionally, DNA-dependent RNA polymerase catalyzes the transcription of DNA into RNA using the four ribonucleoside triphosphates as substrates. The sequence is that of DNA-directed RNA polymerase subunit beta from Mycobacterium sp. (strain KMS).